The following is a 371-amino-acid chain: Peptide chain release factor 2 (371 aa).

The residue at position 252 (Gln252) is an N5-methylglutamine.

Belongs to the prokaryotic/mitochondrial release factor family. In terms of processing, methylated by PrmC. Methylation increases the termination efficiency of RF2.

Its subcellular location is the cytoplasm. Functionally, peptide chain release factor 2 directs the termination of translation in response to the peptide chain termination codons UGA and UAA. The protein is Peptide chain release factor 2 of Staphylococcus epidermidis (strain ATCC 35984 / DSM 28319 / BCRC 17069 / CCUG 31568 / BM 3577 / RP62A).